The chain runs to 228 residues: uncharacterized protein (228 aa).

A coiled-coil region spans residues 196–228 (VKITELLDKAKISINDLNKTIEKLNETVNKYHG).

This is an uncharacterized protein from Acanthamoeba polyphaga (Amoeba).